Reading from the N-terminus, the 397-residue chain is Iripin-2 (397 aa).

Residues 1 to 21 (MEDFKMKTLAAFLSLLVLCWA) form the signal peptide. N-linked (GlcNAc...) asparagine glycans are attached at residues N109 and N270.

This sequence belongs to the serpin family. As to quaternary structure, interacts with mouse MCPT4. As to expression, female salivary gland. Ovary. Midgut.

The protein resides in the secreted. Serine protease inhibitor that modulates blood feeding of ticks on vertebrate species. Inhibits host trypsin, thrombin (F2), alpha-chymotrypsin, cathepsin G (CTSG) and mast cell chymase (CMA1). Inhibits host cathepsin G- and thrombin-induced platelet aggregation. Inhibits acute inflammation in the host. Suppresses neutrophil recruitment in inflamed area. Does not inhibit host plasmin (PLG), factor Xa (F10), factor XIa (F11), elastase and proteinase 3/myeloblastin (PRTN3). Functionally, (Microbial infection) Inhibits IL6 production by mouse splenic dendritic cells in response to Borrelia burgdorferi exposure. Decreases levels of STAT3 phosphorylation in mouse splenic dendritic cells in response to Borrelia burgdorferi exposure and in Borrelia-primed CD4+ T-lymphocytes. Inhibits differentiation of mouse Th17 cells, a subset of CD4+ T-lymphocytes that play a crucial role in protection against extracellular bacteria, in response to Borrelia burgdorferi exposure via inhibition of the IL6/STAT3 signaling pathway. This chain is Iripin-2, found in Ixodes ricinus (Common tick).